The sequence spans 427 residues: Stabilizer of axonemal microtubules 4 (427 aa).

Disordered regions lie at residues 82–105, 273–298, and 314–335; these read TSKS…PLPW, RTLN…QPPQ, and GNKE…SYEQ. Composition is skewed to polar residues over residues 287 to 298 and 321 to 332; these read ASMSHRSYQPPQ and FTLNNPSYVRSS.

In terms of assembly, microtubule inner protein component of sperm flagellar doublet microtubules. Interacts with PPP1CA.

Its subcellular location is the cell projection. The protein localises to the cilium. It localises to the cytoplasm. The protein resides in the cytoskeleton. It is found in the flagellum axoneme. The polypeptide is Stabilizer of axonemal microtubules 4 (Mus musculus (Mouse)).